Reading from the N-terminus, the 219-residue chain is Ras-related protein Rab-3B (219 aa).

An N-acetylalanine modification is found at Ala2. Residues Ser31, Ser32, Val33, Gly34, Lys35, Thr36, Ser37, Pro49, and Ser53 each coordinate GTP. A Mg(2+)-binding site is contributed by Thr36. A Switch 1 motif is present at residues 45–58; sequence DTFTPAFVSTVGID. Residues Thr54 and Asp77 each coordinate Mg(2+). The Switch 2 motif lies at 78-96; sequence TAGQERYRTITTAYYRGAM. Position 80 (Gly80) interacts with GTP. Phosphothreonine is present on Thr86. GTP is bound by residues Asn135, Lys136, Asp138, Ala166, and Lys167. A phosphoserine mark is found at Ser188 and Ser190. 2 S-geranylgeranyl cysteine lipidation sites follow: Cys217 and Cys219. Cys219 carries the post-translational modification Cysteine methyl ester.

It belongs to the small GTPase superfamily. Rab family. As to quaternary structure, interacts with RPH3A and RPH3AL. Interacts with RIMS1. Interacts with RIMS2. The GTP-bound form interacts with GAS8/DRC4 (via coiled-coil domains). Interacts with GDI2, and CHM; phosphorylation at Thr-86 disrupts these interactions. Interacts with MADD (via uDENN domain); the GTP-bound form is preferred for interaction. Requires Mg(2+) as cofactor. In terms of processing, phosphorylation of Thr-86 in the switch II region by LRRK2 prevents the association of RAB regulatory proteins, including CHM and RAB GDP dissociation inhibitor GDI2.

The protein localises to the cell membrane. It is found in the golgi apparatus. The enzyme catalyses GTP + H2O = GDP + phosphate + H(+). Its activity is regulated as follows. Regulated by guanine nucleotide exchange factors (GEFs) which promote the exchange of bound GDP for free GTP. Regulated by GTPase activating proteins (GAPs) which increase the GTP hydrolysis activity. Inhibited by GDP dissociation inhibitors (GDIs) which prevent Rab-GDP dissociation. The small GTPases Rab are key regulators of intracellular membrane trafficking, from the formation of transport vesicles to their fusion with membranes. Rabs cycle between an inactive GDP-bound form and an active GTP-bound form that is able to recruit to membranes different sets of downstream effectors directly responsible for vesicle formation, movement, tethering and fusion. This is Ras-related protein Rab-3B from Rattus norvegicus (Rat).